A 243-amino-acid polypeptide reads, in one-letter code: Pyridoxine 5'-phosphate synthase (243 aa).

Asparagine 7 is a 3-amino-2-oxopropyl phosphate binding site. Residue 9-10 (DH) participates in 1-deoxy-D-xylulose 5-phosphate binding. 3-amino-2-oxopropyl phosphate is bound at residue arginine 18. Histidine 43 functions as the Proton acceptor in the catalytic mechanism. Positions 45 and 50 each coordinate 1-deoxy-D-xylulose 5-phosphate. Catalysis depends on glutamate 70, which acts as the Proton acceptor. Threonine 100 is a binding site for 1-deoxy-D-xylulose 5-phosphate. Catalysis depends on histidine 191, which acts as the Proton donor. Residues glycine 192 and 213 to 214 (GH) contribute to the 3-amino-2-oxopropyl phosphate site.

Belongs to the PNP synthase family. Homooctamer; tetramer of dimers.

It localises to the cytoplasm. It carries out the reaction 3-amino-2-oxopropyl phosphate + 1-deoxy-D-xylulose 5-phosphate = pyridoxine 5'-phosphate + phosphate + 2 H2O + H(+). Its pathway is cofactor biosynthesis; pyridoxine 5'-phosphate biosynthesis; pyridoxine 5'-phosphate from D-erythrose 4-phosphate: step 5/5. Catalyzes the complicated ring closure reaction between the two acyclic compounds 1-deoxy-D-xylulose-5-phosphate (DXP) and 3-amino-2-oxopropyl phosphate (1-amino-acetone-3-phosphate or AAP) to form pyridoxine 5'-phosphate (PNP) and inorganic phosphate. This is Pyridoxine 5'-phosphate synthase from Magnetococcus marinus (strain ATCC BAA-1437 / JCM 17883 / MC-1).